Here is an 893-residue protein sequence, read N- to C-terminus: Valine--tRNA ligase (893 aa).

The short motif at 57–67 (PNVTGTLHMGH) is the 'HIGH' region element. A 'KMSKS' region motif is present at residues 545–549 (KMSKS). Position 548 (Lys548) interacts with ATP. Residues 821 to 855 (TSGSVDLEAERKRLEKDLAAAQKELATTEGKLGNE) are a coiled coil.

The protein belongs to the class-I aminoacyl-tRNA synthetase family. ValS type 1 subfamily. As to quaternary structure, monomer.

The protein localises to the cytoplasm. It catalyses the reaction tRNA(Val) + L-valine + ATP = L-valyl-tRNA(Val) + AMP + diphosphate. Its function is as follows. Catalyzes the attachment of valine to tRNA(Val). As ValRS can inadvertently accommodate and process structurally similar amino acids such as threonine, to avoid such errors, it has a 'posttransfer' editing activity that hydrolyzes mischarged Thr-tRNA(Val) in a tRNA-dependent manner. This chain is Valine--tRNA ligase, found in Nocardia farcinica (strain IFM 10152).